The chain runs to 78 residues: DNA-directed RNA polymerase subunit omega (78 aa).

It belongs to the RNA polymerase subunit omega family. In cyanobacteria the RNAP catalytic core is composed of 2 alpha, 1 beta, 1 beta', 1 gamma and 1 omega subunit. When a sigma factor is associated with the core the holoenzyme is formed, which can initiate transcription.

The enzyme catalyses RNA(n) + a ribonucleoside 5'-triphosphate = RNA(n+1) + diphosphate. Functionally, promotes RNA polymerase assembly. Latches the N- and C-terminal regions of the beta' subunit thereby facilitating its interaction with the beta and alpha subunits. This is DNA-directed RNA polymerase subunit omega from Prochlorococcus marinus subsp. pastoris (strain CCMP1986 / NIES-2087 / MED4).